We begin with the raw amino-acid sequence, 315 residues long: Fe(3+)-citrate-binding protein YfmC (315 aa).

The N-terminal stretch at 1–18 is a signal peptide; it reads MRTYSNKLIAIMSVLLLA. Cys-19 carries N-palmitoyl cysteine lipidation. Cys-19 is lipidated: S-diacylglycerol cysteine. Over residues 27-36 the composition is skewed to low complexity; sequence SSQNNNGSGK. Residues 27–52 form a disordered region; it reads SSQNNNGSGKSESKDSRVIHDEEGKT. Residues 37 to 51 are compositionally biased toward basic and acidic residues; the sequence is SESKDSRVIHDEEGK. One can recognise a Fe/B12 periplasmic-binding domain in the interval 60-315; it reads RVVVLELSFL…KDVLKKVYNK (256 aa).

Belongs to the bacterial solute-binding protein 8 family. The complex is composed of one ATP-binding protein (YfmF), two transmembrane proteins (YfmD and YfmE) and a solute-binding protein (YfmC).

The protein resides in the cell membrane. Its function is as follows. Part of the ABC transporter complex YfmCDEF involved in citrate-dependent Fe(3+) import. Binds citrate-dependent Fe(3+) and delivers it to the surface of YfmDE. This Bacillus subtilis (strain 168) protein is Fe(3+)-citrate-binding protein YfmC (yfmC).